Here is a 266-residue protein sequence, read N- to C-terminus: Putative carbamate hydrolase RutD (266 aa).

The AB hydrolase-1 domain occupies 14–116 (PVVVLISGLG…VLVSVNGWLR (103 aa)).

The protein belongs to the AB hydrolase superfamily. Hydrolase RutD family.

It catalyses the reaction carbamate + 2 H(+) = NH4(+) + CO2. Involved in pyrimidine catabolism. May facilitate the hydrolysis of carbamate, a reaction that can also occur spontaneously. The polypeptide is Putative carbamate hydrolase RutD (Escherichia coli O81 (strain ED1a)).